We begin with the raw amino-acid sequence, 75 residues long: UPF0352 protein YejL (75 aa).

Belongs to the UPF0352 family.

The polypeptide is UPF0352 protein YejL (Escherichia coli O127:H6 (strain E2348/69 / EPEC)).